A 503-amino-acid polypeptide reads, in one-letter code: Lysine--tRNA ligase (503 aa).

Residues Glu412 and Glu419 each contribute to the Mg(2+) site.

The protein belongs to the class-II aminoacyl-tRNA synthetase family. In terms of assembly, homodimer. It depends on Mg(2+) as a cofactor.

The protein resides in the cytoplasm. The enzyme catalyses tRNA(Lys) + L-lysine + ATP = L-lysyl-tRNA(Lys) + AMP + diphosphate. This chain is Lysine--tRNA ligase, found in Idiomarina loihiensis (strain ATCC BAA-735 / DSM 15497 / L2-TR).